The following is a 232-amino-acid chain: Phosphatidylserine decarboxylase proenzyme (232 aa).

Residue Ser190 is the Schiff-base intermediate with substrate; via pyruvic acid of the active site. Position 190 is a pyruvic acid (Ser); by autocatalysis (Ser190).

The protein belongs to the phosphatidylserine decarboxylase family. PSD-A subfamily. Heterodimer of a large membrane-associated beta subunit and a small pyruvoyl-containing alpha subunit. Requires pyruvate as cofactor. Post-translationally, is synthesized initially as an inactive proenzyme. Formation of the active enzyme involves a self-maturation process in which the active site pyruvoyl group is generated from an internal serine residue via an autocatalytic post-translational modification. Two non-identical subunits are generated from the proenzyme in this reaction, and the pyruvate is formed at the N-terminus of the alpha chain, which is derived from the carboxyl end of the proenzyme. The post-translation cleavage follows an unusual pathway, termed non-hydrolytic serinolysis, in which the side chain hydroxyl group of the serine supplies its oxygen atom to form the C-terminus of the beta chain, while the remainder of the serine residue undergoes an oxidative deamination to produce ammonia and the pyruvoyl prosthetic group on the alpha chain.

It is found in the cell membrane. It carries out the reaction a 1,2-diacyl-sn-glycero-3-phospho-L-serine + H(+) = a 1,2-diacyl-sn-glycero-3-phosphoethanolamine + CO2. Its pathway is phospholipid metabolism; phosphatidylethanolamine biosynthesis; phosphatidylethanolamine from CDP-diacylglycerol: step 2/2. In terms of biological role, catalyzes the formation of phosphatidylethanolamine (PtdEtn) from phosphatidylserine (PtdSer). This Rhodopseudomonas palustris (strain BisA53) protein is Phosphatidylserine decarboxylase proenzyme.